The chain runs to 214 residues: MDVDALLQSIPPLAVYLLVSGVVGVESLGIPLPGEVVLVSAALLSSRHDLAVSSIGVGVVAVIGAAVGDSIGYAIGRRFGMPLFDHLGRRFPKHFGPGHVALVERLFNRWGVRAVFFGRFIALLRILAGPLAGALKMHYPRFLAANVSGAICWAGGTTALVYFAGMAAERWMERFSWIALIITVVVGIIAAILLRERTSRIIAELEMEYKNRRH.

4 helical membrane passes run 10 to 30 (IPPLAVYLLVSGVVGVESLGI), 55 to 75 (IGVGVVAVIGAAVGDSIGYAI), 147 to 167 (VSGAICWAGGTTALVYFAGMA), and 174 to 194 (RFSWIALIITVVVGIIAAILL).

The protein belongs to the DedA family.

Its subcellular location is the cell membrane. This is an uncharacterized protein from Mycobacterium leprae (strain TN).